The chain runs to 329 residues: Diaminopimelate epimerase (329 aa).

Asparagine 14 and asparagine 73 together coordinate substrate. Cysteine 82 (proton donor) is an active-site residue. Residues 83–84, asparagine 170, asparagine 206, and 224–225 each bind substrate; these read GN and ER. Cysteine 233 functions as the Proton acceptor in the catalytic mechanism. Substrate is bound at residue 234 to 235; it reads GT.

It belongs to the diaminopimelate epimerase family. As to quaternary structure, homodimer.

The protein resides in the cytoplasm. The catalysed reaction is (2S,6S)-2,6-diaminopimelate = meso-2,6-diaminopimelate. It participates in amino-acid biosynthesis; L-lysine biosynthesis via DAP pathway; DL-2,6-diaminopimelate from LL-2,6-diaminopimelate: step 1/1. In terms of biological role, catalyzes the stereoinversion of LL-2,6-diaminopimelate (L,L-DAP) to meso-diaminopimelate (meso-DAP), a precursor of L-lysine and an essential component of the bacterial peptidoglycan. In Listeria monocytogenes serotype 4a (strain HCC23), this protein is Diaminopimelate epimerase.